A 277-amino-acid polypeptide reads, in one-letter code: Phosphatidylglycerol--prolipoprotein diacylglyceryl transferase (277 aa).

Transmembrane regions (helical) follow at residues 18 to 38 (ISVK…LLLA), 51 to 71 (IIVD…RIYY), 89 to 109 (IWHG…TAII), and 116 to 136 (ISFW…QAIG). R137 is an a 1,2-diacyl-sn-glycero-3-phospho-(1'-sn-glycerol) binding site. The next 3 helical transmembrane spans lie at 177-197 (QPTF…LLII), 205-225 (GELF…IEGM), and 235-255 (FRVS…IIIY).

Belongs to the Lgt family.

It is found in the cell membrane. The catalysed reaction is L-cysteinyl-[prolipoprotein] + a 1,2-diacyl-sn-glycero-3-phospho-(1'-sn-glycerol) = an S-1,2-diacyl-sn-glyceryl-L-cysteinyl-[prolipoprotein] + sn-glycerol 1-phosphate + H(+). It participates in protein modification; lipoprotein biosynthesis (diacylglyceryl transfer). Functionally, catalyzes the transfer of the diacylglyceryl group from phosphatidylglycerol to the sulfhydryl group of the N-terminal cysteine of a prolipoprotein, the first step in the formation of mature lipoproteins. The protein is Phosphatidylglycerol--prolipoprotein diacylglyceryl transferase of Listeria monocytogenes serovar 1/2a (strain ATCC BAA-679 / EGD-e).